The following is a 164-amino-acid chain: uncharacterized protein (164 aa).

This is an uncharacterized protein from Acanthamoeba polyphaga (Amoeba).